A 232-amino-acid chain; its full sequence is ATP synthase subunit a (232 aa).

Transmembrane regions (helical) follow at residues 18-38 (LLFI…IAFI), 74-94 (WAGL…LGLF), 107-127 (TYSL…YLAF), 142-162 (ALIP…PIAL), 173-193 (GHLL…SLMV), and 195-215 (SIPI…VACI).

It belongs to the ATPase A chain family. As to quaternary structure, F-type ATPases have 2 components, CF(1) - the catalytic core - and CF(0) - the membrane proton channel. CF(1) has five subunits: alpha(3), beta(3), gamma(1), delta(1), epsilon(1). CF(0) has three main subunits: a, b and c.

It localises to the mitochondrion inner membrane. Its function is as follows. Mitochondrial membrane ATP synthase (F(1)F(0) ATP synthase or Complex V) produces ATP from ADP in the presence of a proton gradient across the membrane which is generated by electron transport complexes of the respiratory chain. F-type ATPases consist of two structural domains, F(1) - containing the extramembraneous catalytic core and F(0) - containing the membrane proton channel, linked together by a central stalk and a peripheral stalk. During catalysis, ATP synthesis in the catalytic domain of F(1) is coupled via a rotary mechanism of the central stalk subunits to proton translocation. Key component of the proton channel; it may play a direct role in the translocation of protons across the membrane. This is ATP synthase subunit a (ATP6) from Paracentrotus lividus (Common sea urchin).